Reading from the N-terminus, the 402-residue chain is Imidazolonepropionase (402 aa).

H66 and H68 together coordinate Fe(3+). 2 residues coordinate Zn(2+): H66 and H68. 4-imidazolone-5-propanoate contacts are provided by R75, Y138, and H171. Position 138 (Y138) interacts with N-formimidoyl-L-glutamate. H236 is a binding site for Fe(3+). H236 is a Zn(2+) binding site. Q239 is a 4-imidazolone-5-propanoate binding site. Residue D311 participates in Fe(3+) binding. Residue D311 participates in Zn(2+) binding. N313 and G315 together coordinate N-formimidoyl-L-glutamate. Position 316 (T316) interacts with 4-imidazolone-5-propanoate.

It belongs to the metallo-dependent hydrolases superfamily. HutI family. Requires Zn(2+) as cofactor. Fe(3+) serves as cofactor.

Its subcellular location is the cytoplasm. It catalyses the reaction 4-imidazolone-5-propanoate + H2O = N-formimidoyl-L-glutamate. It functions in the pathway amino-acid degradation; L-histidine degradation into L-glutamate; N-formimidoyl-L-glutamate from L-histidine: step 3/3. Its function is as follows. Catalyzes the hydrolytic cleavage of the carbon-nitrogen bond in imidazolone-5-propanoate to yield N-formimidoyl-L-glutamate. It is the third step in the universal histidine degradation pathway. In Pseudomonas aeruginosa (strain ATCC 15692 / DSM 22644 / CIP 104116 / JCM 14847 / LMG 12228 / 1C / PRS 101 / PAO1), this protein is Imidazolonepropionase.